The sequence spans 99 residues: High mobility group nucleosome-binding domain-containing protein 3 (99 aa).

Basic and acidic residues-rich tracts occupy residues Met1 to Arg25, Pro39 to Gly53, and Gly62 to Lys72. The segment at Met1–Glu99 is disordered. The residue at position 6 (Ser6) is a Phosphoserine. Phosphothreonine is present on Thr10. Phosphoserine occurs at positions 78 and 93. The span at Gly81–Ser93 shows a compositional bias: basic and acidic residues.

This sequence belongs to the HMGN family. Interacts with the ligand binding domain of the thyroid receptor (TR) (in vitro). Requires the presence of thyroid hormone for its interaction. Interacts with transcriptional regulator SEHBP. Interacts with nucleosomes. Expressed in kidney, lung, pancreas, testis, skeletal muscle, heart, thyroid gland, pituitary gland, prostate and uterus. Low expression in liver, spleen, placenta and ovaries.

The protein resides in the nucleus. In terms of biological role, binds to nucleosomes, regulating chromatin structure and consequently, chromatin-dependent processes such as transcription, DNA replication and DNA repair. Affects both insulin and glucagon levels and modulates the expression of pancreatic genes involved in insulin secretion. Regulates the expression of the glucose transporter SLC2A2 by binding specifically to its promoter region and recruiting PDX1 and additional transcription factors. Regulates the expression of SLC6A9, a glycine transporter which regulates the glycine concentration in synaptic junctions in the central nervous system, by binding to its transcription start site. May play a role in ocular development and astrocyte function. This is High mobility group nucleosome-binding domain-containing protein 3 (HMGN3) from Homo sapiens (Human).